Reading from the N-terminus, the 859-residue chain is Leucine--tRNA ligase (859 aa).

The 'HIGH' region motif lies at Pro-42–His-52. The short motif at Lys-618 to Ser-622 is the 'KMSKS' region element. Lys-621 contacts ATP.

The protein belongs to the class-I aminoacyl-tRNA synthetase family.

The protein localises to the cytoplasm. It carries out the reaction tRNA(Leu) + L-leucine + ATP = L-leucyl-tRNA(Leu) + AMP + diphosphate. The polypeptide is Leucine--tRNA ligase (Shewanella putrefaciens (strain CN-32 / ATCC BAA-453)).